A 103-amino-acid polypeptide reads, in one-letter code: Acylphosphatase-2 (103 aa).

Residue serine 2 is modified to N-acetylserine. The region spanning 13–103 (SVDYEVFGRV…LDFSGFSTRY (91 aa)) is the Acylphosphatase-like domain. Cysteine 26 carries the post-translational modification S-glutathionyl cysteine; alternate. Catalysis depends on residues arginine 28 and asparagine 46.

Belongs to the acylphosphatase family. Monomer (TU1) or homodimer (TU3) in absence of reducing factors; disulfide linked.

It catalyses the reaction an acyl phosphate + H2O = a carboxylate + phosphate + H(+). In terms of biological role, its physiological role is not yet clear. This is Acylphosphatase-2 (ACYP2) from Meleagris gallopavo (Wild turkey).